The sequence spans 644 residues: MTSQVSSILSRISSPTDLKNLSLAELSLLAEQMRHKIISVLTNTGGHLASNLGIIEVTIALHYVFSSTEDKFIFDVGHQAYPHKLLTGRNTEEFDRIRHDGGLSGFTSPSESMHDLFFSGHAGNALSLALGMAKATEDSRTHILPILGDAAFSCGLTLEALNNISSNLSKFIVILNDNNMSISQNVGVMSKNLSRWIHHPKFSLFSRKIEKWLTKIPRYGNGISKRSHKLSTCLKSLFCPIPIFEQFNLAYMGPVDGHNIKRLISVFQTARDLPFPVLIHICTTKGKGLEIAQENPEKYHGVTANFNSSEKNKLLPTIKPQLTYPDVFGQTVCKLGETSPNLHIVTPAMSLGSRLEAFKEKFPKRFIDVGIAEGHAVTFSAGIAKAKSPVICSIYSTFLHRALDNVFHDVCLQGLPVILAIDRAGLAYGDGCSHHGIYDISFLRAMPNMIICQPRSAIVLQQLLQSSLQWNMPSAIRYPNIAAIQRDPIATDVNMHRDPGLGEILSQGEDILIIGLGHMCNTALSIKLQLLTHGISATVVDPVFIKPFDNNLFSILLMHHSKVIIIEEHSIRGGLASEFNDFLATYGFKVDVLHFGIPDAFFSHGDKESLLKRVGLDTESMVKRILTHFNFRTKTSPSNKLSIV.

Thiamine diphosphate-binding positions include H78 and 120 to 122; that span reads GHA. A Mg(2+)-binding site is contributed by D149. Residues 150–151, N178, and E373 each bind thiamine diphosphate; that span reads AA. N178 provides a ligand contact to Mg(2+).

This sequence belongs to the transketolase family. DXPS subfamily. As to quaternary structure, homodimer. Mg(2+) is required as a cofactor. It depends on thiamine diphosphate as a cofactor.

The enzyme catalyses D-glyceraldehyde 3-phosphate + pyruvate + H(+) = 1-deoxy-D-xylulose 5-phosphate + CO2. Its pathway is metabolic intermediate biosynthesis; 1-deoxy-D-xylulose 5-phosphate biosynthesis; 1-deoxy-D-xylulose 5-phosphate from D-glyceraldehyde 3-phosphate and pyruvate: step 1/1. Functionally, catalyzes the acyloin condensation reaction between C atoms 2 and 3 of pyruvate and glyceraldehyde 3-phosphate to yield 1-deoxy-D-xylulose-5-phosphate (DXP). The protein is 1-deoxy-D-xylulose-5-phosphate synthase of Chlamydia felis (strain Fe/C-56) (Chlamydophila felis).